The following is a 152-amino-acid chain: UPF0266 membrane protein KPK_1957 (152 aa).

3 helical membrane passes run 6-26 (LVII…QFIM), 45-65 (VDGL…ITQH), and 67-87 (TPIT…LFWI).

This sequence belongs to the UPF0266 family.

Its subcellular location is the cell inner membrane. The polypeptide is UPF0266 membrane protein KPK_1957 (Klebsiella pneumoniae (strain 342)).